A 200-amino-acid polypeptide reads, in one-letter code: 3-isopropylmalate dehydratase small subunit (200 aa).

It belongs to the LeuD family. LeuD type 1 subfamily. As to quaternary structure, heterodimer of LeuC and LeuD.

The catalysed reaction is (2R,3S)-3-isopropylmalate = (2S)-2-isopropylmalate. The protein operates within amino-acid biosynthesis; L-leucine biosynthesis; L-leucine from 3-methyl-2-oxobutanoate: step 2/4. Catalyzes the isomerization between 2-isopropylmalate and 3-isopropylmalate, via the formation of 2-isopropylmaleate. The sequence is that of 3-isopropylmalate dehydratase small subunit from Sodalis glossinidius (strain morsitans).